Here is a 144-residue protein sequence, read N- to C-terminus: MTEVNINVTEIMEALPHRYPFLLVDRVIDIAEDEITAIKNVTINEEFFQGHFPQYPVMPGVLIMEALAQAAGVLELSKPENKGKLVFYAGMDNVKYKKQVTPGDQLVLHAKFIKRRGPIAVVEAEATVDGKLAAKGTLTFALGR.

The active site involves His-51.

It belongs to the thioester dehydratase family. FabZ subfamily.

Its subcellular location is the cytoplasm. The catalysed reaction is a (3R)-hydroxyacyl-[ACP] = a (2E)-enoyl-[ACP] + H2O. Involved in unsaturated fatty acids biosynthesis. Catalyzes the dehydration of short chain beta-hydroxyacyl-ACPs and long chain saturated and unsaturated beta-hydroxyacyl-ACPs. In Lactococcus lactis subsp. lactis (strain IL1403) (Streptococcus lactis), this protein is 3-hydroxyacyl-[acyl-carrier-protein] dehydratase FabZ (fabZ2).